The sequence spans 272 residues: NADPH-dependent 7-cyano-7-deazaguanine reductase (272 aa).

82–84 (IES) serves as a coordination point for substrate. 84–85 (SK) contributes to the NADPH binding site. Residue C178 is the Thioimide intermediate of the active site. D185 (proton donor) is an active-site residue. Residue 217–218 (HE) participates in substrate binding. Residue 246 to 247 (RG) participates in NADPH binding.

This sequence belongs to the GTP cyclohydrolase I family. QueF type 2 subfamily. Homodimer.

Its subcellular location is the cytoplasm. It catalyses the reaction 7-aminomethyl-7-carbaguanine + 2 NADP(+) = 7-cyano-7-deazaguanine + 2 NADPH + 3 H(+). Its pathway is tRNA modification; tRNA-queuosine biosynthesis. In terms of biological role, catalyzes the NADPH-dependent reduction of 7-cyano-7-deazaguanine (preQ0) to 7-aminomethyl-7-deazaguanine (preQ1). This Stenotrophomonas maltophilia (strain R551-3) protein is NADPH-dependent 7-cyano-7-deazaguanine reductase.